Here is a 120-residue protein sequence, read N- to C-terminus: UPF0231 protein YacL (120 aa).

It belongs to the UPF0231 family.

The polypeptide is UPF0231 protein YacL (Salmonella paratyphi A (strain ATCC 9150 / SARB42)).